The sequence spans 1078 residues: Phosphatidylinositol-3,5-bisphosphate 3-phosphatase MTMR4 (1078 aa).

Residues 154–571 (DHVKSRFQIE…RALQLWTAVY (418 aa)) enclose the Myotubularin phosphatase domain. Residues 267 to 290 (RMPNGNPSNKGNNDGSDNSDTDFD) form a disordered region. A compositionally biased stretch (low complexity) spans 270-282 (NGNPSNKGNNDGS). Residues Asn321, Asn346, and Ile347 each contribute to the a 1,2-diacyl-sn-glycero-3-phospho-(1D-myo-inositol-3,5-bisphosphate) site. Residues Asn321, Asn346, and Ile347 each contribute to the a 1,2-diacyl-sn-glycero-3-phospho-(1D-myo-inositol-3-phosphate) site. Catalysis depends on Cys408, which acts as the Phosphocysteine intermediate. A 1,2-diacyl-sn-glycero-3-phospho-(1D-myo-inositol-3,5-bisphosphate) is bound by residues Ser409, Asp410, Gly411, Trp412, Asp413, Arg414, Lys450, and Arg454. Residues Ser409, Asp410, Gly411, Trp412, Asp413, and Arg414 each coordinate a 1,2-diacyl-sn-glycero-3-phospho-(1D-myo-inositol-3-phosphate). Residue Arg454 participates in a 1,2-diacyl-sn-glycero-3-phospho-(1D-myo-inositol-3-phosphate) binding. A compositionally biased stretch (polar residues) spans 629–648 (SSDPNLNNHQGNLESCSSSK). Positions 629–694 (SSDPNLNNHQ…SGSATNQNNN (66 aa)) are disordered. Positions 904 to 935 (VQQRLRQMEASYKQEVDLLRRQVWELQLQLEI) form a coiled coil. Residues 960–982 (DGSDMDDLYSDKSEDRLSEASWE) are disordered. Over residues 968 to 982 (YSDKSEDRLSEASWE) the composition is skewed to basic and acidic residues. The segment at 997 to 1057 (DHMASHCFNC…VCNTCYDHIQ (61 aa)) adopts an FYVE-type zinc-finger fold. Zn(2+) contacts are provided by Cys1003, Cys1006, Cys1019, Cys1022, Cys1027, Cys1030, Cys1049, and Cys1052.

It belongs to the protein-tyrosine phosphatase family. Non-receptor class myotubularin subfamily. Homooligomeric.

The protein localises to the early endosome membrane. The protein resides in the recycling endosome membrane. It localises to the late endosome membrane. It is found in the cytoplasmic vesicle. Its subcellular location is the phagosome membrane. The enzyme catalyses a 1,2-diacyl-sn-glycero-3-phospho-(1D-myo-inositol-3-phosphate) + H2O = a 1,2-diacyl-sn-glycero-3-phospho-(1D-myo-inositol) + phosphate. It carries out the reaction a 1,2-diacyl-sn-glycero-3-phospho-(1D-myo-inositol-3,5-bisphosphate) + H2O = a 1,2-diacyl-sn-glycero-3-phospho-(1D-myo-inositol-5-phosphate) + phosphate. It catalyses the reaction 1,2-dioctanoyl-sn-glycero-3-phospho-(1-D-myo-inositol-3-phosphate) + H2O = 1,2-dioctanoyl-sn-glycero-3-phospho-(1D-myo-inositol) + phosphate. The catalysed reaction is 1,2-dioctanoyl-sn-glycero-3-phospho-(1D-myo-inositol-3,5-bisphosphate) + H2O = 1,2-dioctanoyl-sn-glycero-3-phospho-(1D-myo-inositol-5-phosphate) + phosphate. In terms of biological role, lipid phosphatase that specifically dephosphorylates the D-3 position of phosphatidylinositol 3-phosphate and phosphatidylinositol 3,5-bisphosphate, generating phosphatidylinositol and phosphatidylinositol 5-phosphate. Decreases the levels of phosphatidylinositol 3-phosphate, a phospholipid found in cell membranes where it acts as key regulator of both cell signaling and intracellular membrane traffic, in a subset of endosomal membranes to negatively regulate both endocytic recycling and trafficking and/or maturation of endosomes toward lysosomes. Through phosphatidylinositol 3-phosphate turnover in phagosome membranes regulates phagocytosis and phagosome maturation. By decreasing phosphatidylinositol 3-monophosphate (PI3P) levels in immune cells it can also regulate the innate immune response. Beside its lipid phosphatase activity, can also function as a molecular adapter to regulate midbody abscission during mitotic cytokinesis. Can also negatively regulate TGF-beta and BMP signaling through Smad proteins dephosphorylation and retention in endosomes. In Xenopus laevis (African clawed frog), this protein is Phosphatidylinositol-3,5-bisphosphate 3-phosphatase MTMR4 (mtmr4).